An 895-amino-acid chain; its full sequence is Histone-lysine N-methyltransferase EZ3 (895 aa).

The segment covering 1 to 13 has biased composition (low complexity); sequence MASSSKASDSSSQ. Disordered stretches follow at residues 1-30 and 396-446; these read MASS…APAS and SSVS…PGKR. Positions 396–422 are enriched in polar residues; sequence SSVSAEESTTPPSADTSETENASSDMP. The segment covering 427 to 436 has biased composition (basic residues); sequence RKYKISKRGP. The 51-residue stretch at 528-578 folds into the SANT domain; the sequence is TLSCWSALERDLYLKGIEIFGKNSCLIARNLLSGMKTCMEVANYMYNNGAA. A CXC domain is found at 628–732; it reads AGHPTVRKRI…SLGEPPARGD (105 aa). An SET domain is found at 747 to 862; it reads QRILLGRSDV…ASEELFYDYR (116 aa). The interval 870–895 is disordered; it reads AWARRPEGSKKDEASVSHHRAHKVAR. Positions 873–885 are enriched in basic and acidic residues; sequence RRPEGSKKDEASV. Residues 886-895 are compositionally biased toward basic residues; the sequence is SHHRAHKVAR.

The protein belongs to the class V-like SAM-binding methyltransferase superfamily. Histone-lysine methyltransferase family. EZ subfamily. As to expression, widely expressed.

Its subcellular location is the nucleus. The catalysed reaction is L-lysyl(27)-[histone H3] + 3 S-adenosyl-L-methionine = N(6),N(6),N(6)-trimethyl-L-lysyl(27)-[histone H3] + 3 S-adenosyl-L-homocysteine + 3 H(+). Its function is as follows. Polycomb group (PcG) protein. Catalytic subunit of some PcG multiprotein complex, which methylates 'Lys-27' of histone H3, leading to transcriptional repression of the affected target genes. PcG proteins are not required to initiate repression, but to maintain it during later stages of development. This is Histone-lysine N-methyltransferase EZ3 (EZ3) from Zea mays (Maize).